The chain runs to 604 residues: Glutamine--fructose-6-phosphate aminotransferase [isomerizing] (604 aa).

Residue C2 is the Nucleophile; for GATase activity of the active site. In terms of domain architecture, Glutamine amidotransferase type-2 spans 2-219 (CGIMGAVSER…EGDSACVTTQ (218 aa)). 2 SIS domains span residues 279 to 427 (LRAS…DNRA) and 454 to 594 (LASL…VDQP). Residue K599 is the For Fru-6P isomerization activity of the active site.

In terms of assembly, homodimer.

The protein resides in the cytoplasm. It catalyses the reaction D-fructose 6-phosphate + L-glutamine = D-glucosamine 6-phosphate + L-glutamate. Functionally, catalyzes the first step in hexosamine metabolism, converting fructose-6P into glucosamine-6P using glutamine as a nitrogen source. This is Glutamine--fructose-6-phosphate aminotransferase [isomerizing] from Legionella pneumophila subsp. pneumophila (strain Philadelphia 1 / ATCC 33152 / DSM 7513).